A 436-amino-acid chain; its full sequence is GTPase Der (436 aa).

EngA-type G domains lie at 4 to 165 and 172 to 347; these read NVIA…NFDS and FKLS…ENLE. GTP-binding positions include 10–17, 57–61, 119–122, 178–185, 225–229, and 290–293; these read GKPNVGKS, DTGGI, NKLD, GQPNSGKS, DTAGI, and NKWD. Positions 348–432 constitute a KH-like domain; sequence REIKPSVLTN…PINIIFKNKS (85 aa).

The protein belongs to the TRAFAC class TrmE-Era-EngA-EngB-Septin-like GTPase superfamily. EngA (Der) GTPase family. In terms of assembly, associates with the 50S ribosomal subunit.

In terms of biological role, GTPase that plays an essential role in the late steps of ribosome biogenesis. This chain is GTPase Der, found in Mycoplasmopsis agalactiae (strain NCTC 10123 / CIP 59.7 / PG2) (Mycoplasma agalactiae).